The sequence spans 164 residues: 3-isopropylmalate dehydratase small subunit (164 aa).

Belongs to the LeuD family. LeuD type 2 subfamily. As to quaternary structure, heterodimer of LeuC and LeuD.

The enzyme catalyses (2R,3S)-3-isopropylmalate = (2S)-2-isopropylmalate. Its pathway is amino-acid biosynthesis; L-leucine biosynthesis; L-leucine from 3-methyl-2-oxobutanoate: step 2/4. Its function is as follows. Catalyzes the isomerization between 2-isopropylmalate and 3-isopropylmalate, via the formation of 2-isopropylmaleate. This is 3-isopropylmalate dehydratase small subunit from Syntrophus aciditrophicus (strain SB).